A 260-amino-acid chain; its full sequence is uncharacterized protein (260 aa).

This is an uncharacterized protein from Bacillus subtilis (strain 168).